Here is a 190-residue protein sequence, read N- to C-terminus: Dynein axonemal light chain 1 (190 aa).

Ala2 bears the N-acetylalanine mark. LRR repeat units lie at residues 49-70 (NCEK…NGLK), 71-92 (NLRI…EAVG), 94-115 (TLEE…HIMK), and 116-137 (KLKI…VKLA). Ser56 is modified (phosphoserine). One can recognise an LRRCT domain in the interval 150 to 190 (NPLEEKHSAENNWIEEATKRVPKLKKLDGTPVIKGDEEEDN).

The protein belongs to the dynein light chain LC1-type family. As to quaternary structure, interacts with ZMYND10 (via C-terminus). Interacts with DNAH5, a outer arm dynein heavy chain. Interacts with tubulin located within the A-tubule of the outer doublets in a ATP-independent manner. As to expression, expressed in tissues carrying motile cilia such as respiratory epithelia, ependyma and testis.

It is found in the cytoplasm. The protein resides in the cytoskeleton. It localises to the cilium axoneme. Its function is as follows. Part of the multisubunit axonemal ATPase complexes that generate the force for cilia motility and govern beat frequency. Component of the outer arm dynein (ODA). May be involved in a mechanosensory feedback mechanism controlling ODA activity based on external conformational cues by tethering the outer arm dynein heavy chain (DNAH5) to the microtubule within the axoneme. Important for ciliary function in the airways and for the function of the cilia that produce the nodal flow essential for the determination of the left-right asymmetry. The sequence is that of Dynein axonemal light chain 1 from Homo sapiens (Human).